Reading from the N-terminus, the 131-residue chain is MKLRGRKVVGGKAEGELIVSKKPLSFLGGVDPETGIVTDAESDIRGQSIAGKILAFPRGKGSTVGSYVIYALKKNGKAPKAIIVGEAETIVATGAIIAGIPMVQGIDVSKLKTGQRVRINADEGEVEVLDG.

The active-site Proton acceptor is the serine 62.

It belongs to the AcnX type II small subunit family. In terms of assembly, heterodimer composed of a large subunit (PMDh-L) and a small subunit (PMDh-S).

The enzyme catalyses (R)-5-phosphomevalonate = (2E)-3-methyl-5-phosphooxypent-2-enoate + H2O. It participates in isoprenoid biosynthesis; isopentenyl diphosphate biosynthesis via mevalonate pathway. Its function is as follows. Component of a hydro-lyase that catalyzes the dehydration of mevalonate 5-phosphate (MVA5P) to form trans-anhydromevalonate 5-phosphate (tAHMP). Involved in the archaeal mevalonate (MVA) pathway, which provides fundamental precursors for isoprenoid biosynthesis, such as isopentenyl diphosphate (IPP) and dimethylallyl diphosphate (DMAPP). In Thermococcus gammatolerans (strain DSM 15229 / JCM 11827 / EJ3), this protein is Phosphomevalonate dehydratase small subunit.